The sequence spans 172 residues: Centrin-2 (172 aa).

The interval 1 to 31 is disordered; sequence MASNFKKANMASTTQRKRMSPKPELTEEQKQ. Ala-2 carries the N-acetylalanine modification. The interval 2 to 25 is required for self-assembly; that stretch reads ASNFKKANMASTTQRKRMSPKPEL. Phosphoserine is present on Ser-20. A Glycyl lysine isopeptide (Lys-Gly) (interchain with G-Cter in SUMO2) cross-link involves residue Lys-22. At Thr-26 the chain carries Phosphothreonine. 4 EF-hand domains span residues 28-63, 64-99, 101-136, and 137-172; these read EQKQ…LGFE, PKKE…KMSE, DTKE…LGEN, and LSDE…TSLY. Residues Asp-41, Asp-43, Thr-45, Thr-47, and Glu-52 each coordinate Ca(2+). Positions 150, 152, 154, 156, and 161 each coordinate Ca(2+).

Belongs to the centrin family. As to quaternary structure, monomer. Homooligomer. Interacts with CCP110, SFI1. Component of the XPC complex composed of XPC, RAD23B and CETN2. Component of the nuclear pore complex (NPC)-associated TREX-2 complex (transcription and export complex 2), composed of at least GANP, 2 copies of ENY2, PCID2, SEM1/DSS1, and either centrin CETN2 or centrin CETN3. The TREX-2 complex also associates with ALYREF/ALY and with the nucleoporin NUP153. Interacts with USP49. Forms a microtubule-associated complex with POC5, POC1B and FAM161A. Interacts with CCDC15.

The protein resides in the cytoplasm. It localises to the cytoskeleton. Its subcellular location is the microtubule organizing center. It is found in the centrosome. The protein localises to the centriole. The protein resides in the nucleus. It localises to the nucleus envelope. Its subcellular location is the nuclear pore complex. In terms of biological role, plays a fundamental role in microtubule organizing center structure and function. Required for centriole duplication and correct spindle formation. Has a role in regulating cytokinesis and genome stability via cooperation with CALM1 and CCP110. Its function is as follows. Involved in global genome nucleotide excision repair (GG-NER) by acting as component of the XPC complex. Cooperatively with RAD23B appears to stabilize XPC. In vitro, stimulates DNA binding of the XPC:RAD23B dimer. The XPC complex is proposed to represent the first factor bound at the sites of DNA damage and together with other core recognition factors, XPA, RPA and the TFIIH complex, is part of the pre-incision (or initial recognition) complex. The XPC complex recognizes a wide spectrum of damaged DNA characterized by distortions of the DNA helix such as single-stranded loops, mismatched bubbles or single-stranded overhangs. The orientation of XPC complex binding appears to be crucial for inducing a productive NER. XPC complex is proposed to recognize and to interact with unpaired bases on the undamaged DNA strand which is followed by recruitment of the TFIIH complex and subsequent scanning for lesions in the opposite strand in a 5'-to-3' direction by the NER machinery. Cyclobutane pyrimidine dimers (CPDs) which are formed upon UV-induced DNA damage esacpe detection by the XPC complex due to a low degree of structural perurbation. Instead they are detected by the UV-DDB complex which in turn recruits and cooperates with the XPC complex in the respective DNA repair. Functionally, as a component of the TREX-2 complex, involved in the export of mRNAs to the cytoplasm through the nuclear pores. This Bos taurus (Bovine) protein is Centrin-2 (CETN2).